The primary structure comprises 188 residues: Small ribosomal subunit protein uS7 (188 aa).

The protein belongs to the universal ribosomal protein uS7 family. As to quaternary structure, part of the 30S ribosomal subunit.

Its function is as follows. One of the primary rRNA binding proteins, it binds directly to 16S rRNA where it nucleates assembly of the head domain of the 30S subunit. Is located at the subunit interface close to the decoding center. The chain is Small ribosomal subunit protein uS7 from Methanococcus maripaludis (strain C7 / ATCC BAA-1331).